The chain runs to 219 residues: MASVTDGNTGIRDASDQNFDYMFKLLIIGNSSVGKTSFLFRYADDTFTPAFVSTVGIDFKVKTVYRHEKRVKLQIWDTAGQERYRTITTAYYRGAMGFILMYDITNEESFNAVQDWATQIKTYSWDNAQVILVGNKCDMEEERVIPTEKGRLLAEQLGFDFFEASAKENISVRQAFERLVDAICDKMSDSMDTDPSVLGASKTTRLSDTPPLLQQNCSC.

Position 2 is an N-acetylalanine (Ala-2). GTP is bound by residues Ser-31, Ser-32, Val-33, Gly-34, Lys-35, Thr-36, Ser-37, Pro-49, and Ser-53. Thr-36 is a Mg(2+) binding site. The short motif at 45 to 58 (DTFTPAFVSTVGID) is the Switch 1 element. Mg(2+)-binding residues include Thr-54 and Asp-77. The short motif at 78-96 (TAGQERYRTITTAYYRGAM) is the Switch 2 element. A GTP-binding site is contributed by Gly-80. A Phosphothreonine modification is found at Thr-86. Residues Asn-135, Lys-136, Asp-138, Ala-166, and Lys-167 each coordinate GTP. Phosphoserine is present on residues Ser-188 and Ser-190. 2 S-geranylgeranyl cysteine lipidation sites follow: Cys-217 and Cys-219. Cys-219 carries the post-translational modification Cysteine methyl ester.

It belongs to the small GTPase superfamily. Rab family. Interacts with RPH3A and RPH3AL. Interacts with RIMS1. Interacts with RIMS2. The GTP-bound form interacts with GAS8/DRC4 (via coiled-coil domains). Interacts with GDI2, and CHM; phosphorylation at Thr-86 disrupts these interactions. Interacts with MADD (via uDENN domain); the GTP-bound form is preferred for interaction. Mg(2+) serves as cofactor. Post-translationally, phosphorylation of Thr-86 in the switch II region by LRRK2 prevents the association of RAB regulatory proteins, including CHM and RAB GDP dissociation inhibitor GDI2.

The protein localises to the cell membrane. It is found in the golgi apparatus. The enzyme catalyses GTP + H2O = GDP + phosphate + H(+). With respect to regulation, regulated by guanine nucleotide exchange factors (GEFs) which promote the exchange of bound GDP for free GTP. Regulated by GTPase activating proteins (GAPs) which increase the GTP hydrolysis activity. Inhibited by GDP dissociation inhibitors (GDIs) which prevent Rab-GDP dissociation. In terms of biological role, the small GTPases Rab are key regulators of intracellular membrane trafficking, from the formation of transport vesicles to their fusion with membranes. Rabs cycle between an inactive GDP-bound form and an active GTP-bound form that is able to recruit to membranes different sets of downstream effectors directly responsible for vesicle formation, movement, tethering and fusion. The chain is Ras-related protein Rab-3B from Rattus norvegicus (Rat).